A 379-amino-acid chain; its full sequence is UPF0754 protein BpOF4_11355 (379 aa).

2 helical membrane-spanning segments follow: residues 6–26 and 359–379; these read FIGF…SLAI and LGAL…LFIG.

This sequence belongs to the UPF0754 family.

The protein localises to the cell membrane. In Alkalihalophilus pseudofirmus (strain ATCC BAA-2126 / JCM 17055 / OF4) (Bacillus pseudofirmus), this protein is UPF0754 protein BpOF4_11355.